A 387-amino-acid polypeptide reads, in one-letter code: Protein NDRG3 (387 aa).

A disordered region spans residues 329-387 (PSASMTRLVRSRTHSASSSGSMEMPRSRSHTSNAQLQSTSNNSLSNQIQETPHTIELSC). Residues 359–377 (TSNAQLQSTSNNSLSNQIQ) show a composition bias toward low complexity.

It belongs to the NDRG family.

In Xenopus tropicalis (Western clawed frog), this protein is Protein NDRG3.